The following is a 920-amino-acid chain: Translation initiation factor IF-2 (920 aa).

Basic and acidic residues-rich tracts occupy residues 149 to 175 (EAEMKAAEEARQKEVAAPVVEKEEKPV), 186 to 197 (AEKKATADKAAK), and 255 to 265 (AKPEGADDKKK). Disordered regions lie at residues 149 to 197 (EAEM…KAAK) and 245 to 319 (EAKK…KQRQ). Positions 301–311 (SSGGVGGWRSG) are enriched in gly residues. Positions 418-585 (PRPPVVTVMG…NVLLQAEILE (168 aa)) constitute a tr-type G domain. The interval 427 to 434 (GHVDHGKT) is G1. 427–434 (GHVDHGKT) is a GTP binding site. The G2 stretch occupies residues 452–456 (GITQH). The G3 stretch occupies residues 473–476 (DTPG). GTP is bound by residues 473–477 (DTPGH) and 527–530 (NKID). Residues 527–530 (NKID) are G4. A G5 region spans residues 563 to 565 (SAK).

The protein belongs to the TRAFAC class translation factor GTPase superfamily. Classic translation factor GTPase family. IF-2 subfamily.

Its subcellular location is the cytoplasm. Functionally, one of the essential components for the initiation of protein synthesis. Protects formylmethionyl-tRNA from spontaneous hydrolysis and promotes its binding to the 30S ribosomal subunits. Also involved in the hydrolysis of GTP during the formation of the 70S ribosomal complex. The sequence is that of Translation initiation factor IF-2 from Polynucleobacter asymbioticus (strain DSM 18221 / CIP 109841 / QLW-P1DMWA-1) (Polynucleobacter necessarius subsp. asymbioticus).